Here is a 166-residue protein sequence, read N- to C-terminus: Putative esterase sll0410 (166 aa).

Residue Asp-45 is part of the active site.

It belongs to the 4-hydroxybenzoyl-CoA thioesterase family.

The polypeptide is Putative esterase sll0410 (Synechocystis sp. (strain ATCC 27184 / PCC 6803 / Kazusa)).